The chain runs to 474 residues: Protein nucleotidyltransferase YdiU (474 aa).

8 residues coordinate ATP: glycine 89, glycine 91, arginine 92, lysine 112, aspartate 124, glycine 125, arginine 175, and arginine 182. Residue aspartate 256 is the Proton acceptor of the active site. Residues asparagine 257 and aspartate 266 each coordinate Mg(2+). An ATP-binding site is contributed by aspartate 266.

This sequence belongs to the SELO family. Mg(2+) serves as cofactor. Mn(2+) is required as a cofactor.

It carries out the reaction L-seryl-[protein] + ATP = 3-O-(5'-adenylyl)-L-seryl-[protein] + diphosphate. The enzyme catalyses L-threonyl-[protein] + ATP = 3-O-(5'-adenylyl)-L-threonyl-[protein] + diphosphate. The catalysed reaction is L-tyrosyl-[protein] + ATP = O-(5'-adenylyl)-L-tyrosyl-[protein] + diphosphate. It catalyses the reaction L-histidyl-[protein] + UTP = N(tele)-(5'-uridylyl)-L-histidyl-[protein] + diphosphate. It carries out the reaction L-seryl-[protein] + UTP = O-(5'-uridylyl)-L-seryl-[protein] + diphosphate. The enzyme catalyses L-tyrosyl-[protein] + UTP = O-(5'-uridylyl)-L-tyrosyl-[protein] + diphosphate. In terms of biological role, nucleotidyltransferase involved in the post-translational modification of proteins. It can catalyze the addition of adenosine monophosphate (AMP) or uridine monophosphate (UMP) to a protein, resulting in modifications known as AMPylation and UMPylation. This Corynebacterium glutamicum (strain ATCC 13032 / DSM 20300 / JCM 1318 / BCRC 11384 / CCUG 27702 / LMG 3730 / NBRC 12168 / NCIMB 10025 / NRRL B-2784 / 534) protein is Protein nucleotidyltransferase YdiU.